Consider the following 266-residue polypeptide: 3-deoxy-manno-octulosonate cytidylyltransferase (266 aa).

The protein belongs to the KdsB family.

The protein resides in the cytoplasm. The enzyme catalyses 3-deoxy-alpha-D-manno-oct-2-ulosonate + CTP = CMP-3-deoxy-beta-D-manno-octulosonate + diphosphate. It functions in the pathway nucleotide-sugar biosynthesis; CMP-3-deoxy-D-manno-octulosonate biosynthesis; CMP-3-deoxy-D-manno-octulosonate from 3-deoxy-D-manno-octulosonate and CTP: step 1/1. The protein operates within bacterial outer membrane biogenesis; lipopolysaccharide biosynthesis. Activates KDO (a required 8-carbon sugar) for incorporation into bacterial lipopolysaccharide in Gram-negative bacteria. In Paraburkholderia xenovorans (strain LB400), this protein is 3-deoxy-manno-octulosonate cytidylyltransferase.